Here is a 111-residue protein sequence, read N- to C-terminus: MRGARCHNRRCYVYGHLYDSGLGYPALIADEKGGKVVGELYEINEQHLVSLDELEDYAPDRNHNLYERVLHTLEDGSHCYLYVVTPDSPLVRTLIPSGDWLDWTENKKSTE.

Residue 14 to 17 (YGHL) participates in substrate binding. Glu55 functions as the Proton acceptor in the catalytic mechanism.

This sequence belongs to the gamma-glutamylcyclotransferase family.

Its function is as follows. Putative gamma-glutamylcyclotransferase. This chain is Putative gamma-glutamylcyclotransferase BH1612, found in Halalkalibacterium halodurans (strain ATCC BAA-125 / DSM 18197 / FERM 7344 / JCM 9153 / C-125) (Bacillus halodurans).